The following is a 311-amino-acid chain: Halocin-S8 (311 aa).

2 propeptides span residues 1–230 (MSDK…IQLQ) and 267–311 (TVAC…TSFW).

Its subcellular location is the secreted. Its function is as follows. Has antibacterial activity against the haloarchaeons H.salinarium NRC817, Halobacterium GRB and H.gibbonsii. The protein is Halocin-S8 (halS8) of Haloarchaeon S8a.